Here is a 356-residue protein sequence, read N- to C-terminus: Probable arabinogalactan endo-beta-1,4-galactanase A (356 aa).

The signal sequence occupies residues 1–21 (MLGKTVLLPLLVLLCHSLASA). Asn-133 carries an N-linked (GlcNAc...) asparagine glycan. Glu-157 (proton donor) is an active-site residue. Glu-268 functions as the Nucleophile in the catalytic mechanism.

This sequence belongs to the glycosyl hydrolase 53 family.

The protein resides in the secreted. It carries out the reaction The enzyme specifically hydrolyzes (1-&gt;4)-beta-D-galactosidic linkages in type I arabinogalactans.. In terms of biological role, endogalactanase involved in the degradation of plant cell wall polysaccharides, and more particularly of hairy regions of pectin. This Aspergillus fumigatus (strain CBS 144.89 / FGSC A1163 / CEA10) (Neosartorya fumigata) protein is Probable arabinogalactan endo-beta-1,4-galactanase A (galA).